A 399-amino-acid polypeptide reads, in one-letter code: S-adenosylmethionine synthase (399 aa).

His17 lines the ATP pocket. Asp19 is a Mg(2+) binding site. Glu45 contributes to the K(+) binding site. Glu58 and Gln101 together coordinate L-methionine. The interval 101–111 (QSPDIAQGVDE) is flexible loop. ATP-binding positions include 177–179 (DAK), 244–245 (RF), Asp253, 259–260 (RK), Ala276, and Lys280. Asp253 serves as a coordination point for L-methionine. Lys284 lines the L-methionine pocket.

The protein belongs to the AdoMet synthase family. As to quaternary structure, homotetramer; dimer of dimers. Mg(2+) is required as a cofactor. It depends on K(+) as a cofactor.

The protein resides in the cytoplasm. It catalyses the reaction L-methionine + ATP + H2O = S-adenosyl-L-methionine + phosphate + diphosphate. It participates in amino-acid biosynthesis; S-adenosyl-L-methionine biosynthesis; S-adenosyl-L-methionine from L-methionine: step 1/1. Its function is as follows. Catalyzes the formation of S-adenosylmethionine (AdoMet) from methionine and ATP. The overall synthetic reaction is composed of two sequential steps, AdoMet formation and the subsequent tripolyphosphate hydrolysis which occurs prior to release of AdoMet from the enzyme. The chain is S-adenosylmethionine synthase from Listeria innocua serovar 6a (strain ATCC BAA-680 / CLIP 11262).